The chain runs to 100 residues: MPDGGRDTELLIEDEVREPRMFRVLLHNDDYTTMEFVVSILIEVFRRTPDEATRIMLAVHEKGVGECGVYTAEVAETKVALVHARARREGYPLRCTLEEV.

The protein belongs to the ClpS family. In terms of assembly, binds to the N-terminal domain of the chaperone ClpA.

In terms of biological role, involved in the modulation of the specificity of the ClpAP-mediated ATP-dependent protein degradation. In Nitratidesulfovibrio vulgaris (strain DSM 19637 / Miyazaki F) (Desulfovibrio vulgaris), this protein is ATP-dependent Clp protease adapter protein ClpS.